Consider the following 282-residue polypeptide: Bis(5'-nucleosyl)-tetraphosphatase, symmetrical (282 aa).

The protein belongs to the Ap4A hydrolase family.

It carries out the reaction P(1),P(4)-bis(5'-adenosyl) tetraphosphate + H2O = 2 ADP + 2 H(+). Its function is as follows. Hydrolyzes diadenosine 5',5'''-P1,P4-tetraphosphate to yield ADP. This Salmonella arizonae (strain ATCC BAA-731 / CDC346-86 / RSK2980) protein is Bis(5'-nucleosyl)-tetraphosphatase, symmetrical.